The primary structure comprises 698 residues: Glycine--tRNA ligase beta subunit (698 aa).

The protein belongs to the class-II aminoacyl-tRNA synthetase family. Tetramer of two alpha and two beta subunits.

The protein localises to the cytoplasm. The catalysed reaction is tRNA(Gly) + glycine + ATP = glycyl-tRNA(Gly) + AMP + diphosphate. This is Glycine--tRNA ligase beta subunit from Xanthomonas campestris pv. campestris (strain 8004).